Here is a 147-residue protein sequence, read N- to C-terminus: Hemoglobin subunit delta (147 aa).

The Globin domain maps to 3–147 (NLTAAEKTQV…VANALAHKYH (145 aa)). Heme b is bound by residues His64 and His93.

The protein belongs to the globin family. As to quaternary structure, heterotetramer of two delta chains and two alpha chains. As to expression, red blood cells.

This is Hemoglobin subunit delta (HBD) from Loxodonta africana (African elephant).